Here is a 272-residue protein sequence, read N- to C-terminus: MNNRVHQGHFARKRFGQNFLNDQFVIDSIVSAIHPVPGEAVVEIGPGLGALTEPVAARMDHMTVIELDRDLAARLASHPQLKDKLTIHQQDAMKVNFSELSEQAGQPLRVFGNLPYNISTPLMFHLFSYTDAIRDMHFMLQKEVVNRLVAGPNSKAYGRLTVMAQYYCNVIPVLEVPPTAFTPAPKVDSAVVRLIPHVQMPHPVGDVRMLSRITTQAFNQRRKTVRNSLGDLFTSEQLIELGIDPILRAENISVAQYCKLANWLSAQSTPQK.

S-adenosyl-L-methionine is bound by residues Asn18, Leu20, Gly45, Glu66, Asp91, and Asn113.

It belongs to the class I-like SAM-binding methyltransferase superfamily. rRNA adenine N(6)-methyltransferase family. RsmA subfamily.

Its subcellular location is the cytoplasm. It carries out the reaction adenosine(1518)/adenosine(1519) in 16S rRNA + 4 S-adenosyl-L-methionine = N(6)-dimethyladenosine(1518)/N(6)-dimethyladenosine(1519) in 16S rRNA + 4 S-adenosyl-L-homocysteine + 4 H(+). Functionally, specifically dimethylates two adjacent adenosines (A1518 and A1519) in the loop of a conserved hairpin near the 3'-end of 16S rRNA in the 30S particle. May play a critical role in biogenesis of 30S subunits. The polypeptide is Ribosomal RNA small subunit methyltransferase A (Yersinia pseudotuberculosis serotype O:1b (strain IP 31758)).